A 736-amino-acid chain; its full sequence is Copper-exporting P-type ATPase (736 aa).

The span at 1 to 17 shows a compositional bias: basic residues; sequence MKHDHHQGHTHSGKGHA. The tract at residues 1–32 is disordered; sequence MKHDHHQGHTHSGKGHACHHEHNSPKTQQASS. 6 consecutive transmembrane segments (helical) span residues 85–105, 114–134, 149–169, 183–203, 341–361, and 369–389; these read FWIA…GHGL, SSWI…WPFF, FTLI…AVLW, VVAV…LGQV, GWFV…WALL, and YGLI…LGLA. Catalysis depends on D426, which acts as the 4-aspartylphosphate intermediate. The Mg(2+) site is built by D426, T428, and D624. 2 helical membrane-spanning segments follow: residues 682–702 and 706–726; these read LFFA…VLYP and LLLS…SVII.

Belongs to the cation transport ATPase (P-type) (TC 3.A.3) family. Type IB subfamily. Mg(2+) serves as cofactor.

Its subcellular location is the cell inner membrane. It carries out the reaction Cu(+)(in) + ATP + H2O = Cu(+)(out) + ADP + phosphate + H(+). With respect to regulation, activated by phospholipids, Mg(2+) and Cu(+). Its function is as follows. Couples the hydrolysis of ATP with the export of copper. The sequence is that of Copper-exporting P-type ATPase from Legionella pneumophila subsp. pneumophila (strain Philadelphia 1 / ATCC 33152 / DSM 7513).